We begin with the raw amino-acid sequence, 390 residues long: Pyruvate dehydrogenase E1 component subunit alpha, somatic form, mitochondrial (390 aa).

The N-terminal 29 residues, 1-29 (MRKMLAAVSRVLAGAAQKPASRVLVASRN), are a transit peptide targeting the mitochondrion. Lys-63 carries the N6-acetyllysine; alternate modification. Lys-63 is subject to N6-succinyllysine; alternate. Pyruvate-binding residues include His-92, Tyr-118, Arg-119, Ala-157, Gly-165, Val-167, Asp-196, Gly-197, Ala-198, Asn-225, and Tyr-227. Tyr-118 and Arg-119 together coordinate thiamine diphosphate. 6 residues coordinate thiamine diphosphate: Gly-165, Val-167, Asp-196, Gly-197, Ala-198, and Asn-225. Mg(2+) is bound at residue Asp-196. The Mg(2+) site is built by Asn-225 and Tyr-227. Position 232 is a phosphoserine; by PDK1 (Ser-232). Lys-244 is modified (N6-acetyllysine; alternate). Lys-244 is modified (N6-succinyllysine; alternate). Lys-267 is subject to N6-acetyllysine. N6-succinyllysine is present on Lys-277. His-292 contacts thiamine diphosphate. Phosphoserine; by PDK1, PDK2, PDK3 and PDK4 is present on Ser-293. A Phosphoserine modification is found at Ser-295. Ser-300 carries the phosphoserine; by PDK1, PDK2, PDK3 and PDK4 modification. Residue Tyr-301 is modified to Phosphotyrosine. At Lys-313 the chain carries N6-acetyllysine; alternate. N6-succinyllysine; alternate is present on Lys-313. Lys-321 and Lys-336 each carry N6-acetyllysine. N6-succinyllysine is present on Lys-385.

As to quaternary structure, heterotetramer of two PDHA1 and two PDHB subunits. The heterotetramer interacts with DLAT, and is part of the multimeric pyruvate dehydrogenase complex that contains multiple copies of pyruvate dehydrogenase (E1), dihydrolipoamide acetyltransferase (DLAT, E2) and lipoamide dehydrogenase (DLD, E3). These subunits are bound to an inner core composed of about 48 DLAT and 12 PDHX molecules. Requires thiamine diphosphate as cofactor. Mg(2+) is required as a cofactor. In terms of processing, phosphorylation at Ser-232, Ser-293 and Ser-300 by PDK family kinases inactivates the enzyme; for this phosphorylation at a single site is sufficient. Phosphorylation at Ser-293 interferes with access to active site, and thereby inactivates the enzyme. Dephosphorylation at all three sites, i.e. at Ser-232, Ser-293 and Ser-300, is required for reactivation. Acetylation alters the phosphorylation pattern. Deacetylated by SIRT3. In terms of tissue distribution, in all tissues, but in very low amount in testis.

It localises to the mitochondrion matrix. The enzyme catalyses N(6)-[(R)-lipoyl]-L-lysyl-[protein] + pyruvate + H(+) = N(6)-[(R)-S(8)-acetyldihydrolipoyl]-L-lysyl-[protein] + CO2. Pyruvate dehydrogenase activity is inhibited by phosphorylation of PDHA1; it is reactivated by dephosphorylation. Its function is as follows. The pyruvate dehydrogenase complex catalyzes the overall conversion of pyruvate to acetyl-CoA and CO(2), and thereby links the glycolytic pathway to the tricarboxylic cycle. This Rattus norvegicus (Rat) protein is Pyruvate dehydrogenase E1 component subunit alpha, somatic form, mitochondrial (Pdha1).